Here is a 205-residue protein sequence, read N- to C-terminus: Ras-related protein rab-6.2 (205 aa).

Residues 18 to 25 (EQSVGKTS), Thr-42, 66 to 70 (TAGQE), and 124 to 127 (KTDL) each bind GTP. Residues Cys-203 and Cys-205 are each lipidated (S-geranylgeranyl cysteine). Cys-205 is subject to Cysteine methyl ester.

Belongs to the small GTPase superfamily. Rab family. In terms of assembly, interacts with GARP complex component vps-52. Interacts (in GTP-bound form) with lin-10. May interact (in GTP-bound form) with eat-17. As to expression, highly expressed in body wall muscles, pharyngeal and vulval muscles, hypodermis, intestine, the gonad, coelomocytes, and neurons, including command interneuron (at protein level). Highly expressed in the terminal bulb muscles.

The protein resides in the perikaryon. The protein localises to the cell projection. It localises to the dendrite. It is found in the golgi apparatus. Its subcellular location is the cytoplasmic vesicle. Functionally, the small GTPases Rab are key regulators of intracellular membrane trafficking, from the formation of transport vesicles to their fusion with membranes. Rabs cycle between an inactive GDP-bound form and an active GTP-bound form that is able to recruit to membranes different set of downstream effectors directly responsible for vesicle formation, movement, tethering and fusion. In its active GTP-bound form, acts redundantly with rab-6.1 (in its active GTP-bound form) to positively regulate the retrograde trafficking of cargo molecules from endosomes to the Golgi compartment. Required for the retrograde trafficking of glr-1, a subunit of AMPA-type glutamate receptors (AMPRs), out of early endosomes and into the Golgi compartment in neurons. Its role in glr-1 trafficking may partly be mediated by its interaction with lin-10 and association with components of the retromer complex such as rme-8. Together with rab-6.2, promotes the retrograde trafficking of mig-14 from endosomes to Golgi structures in the intestine. Plays a role in the epidermis to promote cuticle integrity and impermeability of the cuticle barrier to exogenous molecules. May have a role in the glycosylation of the cuticular surface. Required for seam cell division and alae formation. Required for grinder formation, which is the feeding organ that breaks down food. In contrast to rab-6.1, may play a minor role in the exocytosis of secretory vesicles (cortical granules) during the oocyte-to-embryo transition. The protein is Ras-related protein rab-6.2 of Caenorhabditis elegans.